A 673-amino-acid chain; its full sequence is UvrABC system protein B (673 aa).

The Helicase ATP-binding domain occupies 25-413 (EGIESGLAHQ…GSDIAEQVVR (389 aa)). 38 to 45 (GVTGSGKT) lines the ATP pocket. A Beta-hairpin motif is present at residues 91–114 (YYDYYQPEAYVPTTDTFIEKDASV). Residues 430-583 (QVDDLLSEIN…QHQYNLDNNI (154 aa)) enclose the Helicase C-terminal domain. The region spanning 634–669 (DTKIVELEKLMQGHAQNLEFEQAAAMRDKIAKLRIQ) is the UVR domain.

The protein belongs to the UvrB family. As to quaternary structure, forms a heterotetramer with UvrA during the search for lesions. Interacts with UvrC in an incision complex.

It localises to the cytoplasm. Functionally, the UvrABC repair system catalyzes the recognition and processing of DNA lesions. A damage recognition complex composed of 2 UvrA and 2 UvrB subunits scans DNA for abnormalities. Upon binding of the UvrA(2)B(2) complex to a putative damaged site, the DNA wraps around one UvrB monomer. DNA wrap is dependent on ATP binding by UvrB and probably causes local melting of the DNA helix, facilitating insertion of UvrB beta-hairpin between the DNA strands. Then UvrB probes one DNA strand for the presence of a lesion. If a lesion is found the UvrA subunits dissociate and the UvrB-DNA preincision complex is formed. This complex is subsequently bound by UvrC and the second UvrB is released. If no lesion is found, the DNA wraps around the other UvrB subunit that will check the other stand for damage. This chain is UvrABC system protein B, found in Colwellia psychrerythraea (strain 34H / ATCC BAA-681) (Vibrio psychroerythus).